We begin with the raw amino-acid sequence, 390 residues long: Dual-specificity RNA methyltransferase RlmN (390 aa).

E111 (proton acceptor) is an active-site residue. The region spanning 117–356 (EDDRATLCVS…VIVRKTRGDD (240 aa)) is the Radical SAM core domain. Cysteines 124 and 361 form a disulfide. Residues C131, C135, and C138 each contribute to the [4Fe-4S] cluster site. S-adenosyl-L-methionine contacts are provided by residues 185 to 186 (GE), S217, 239 to 241 (SLH), and N318. The S-methylcysteine intermediate role is filled by C361.

This sequence belongs to the radical SAM superfamily. RlmN family. [4Fe-4S] cluster is required as a cofactor.

The protein localises to the cytoplasm. It carries out the reaction adenosine(2503) in 23S rRNA + 2 reduced [2Fe-2S]-[ferredoxin] + 2 S-adenosyl-L-methionine = 2-methyladenosine(2503) in 23S rRNA + 5'-deoxyadenosine + L-methionine + 2 oxidized [2Fe-2S]-[ferredoxin] + S-adenosyl-L-homocysteine. The catalysed reaction is adenosine(37) in tRNA + 2 reduced [2Fe-2S]-[ferredoxin] + 2 S-adenosyl-L-methionine = 2-methyladenosine(37) in tRNA + 5'-deoxyadenosine + L-methionine + 2 oxidized [2Fe-2S]-[ferredoxin] + S-adenosyl-L-homocysteine. Specifically methylates position 2 of adenine 2503 in 23S rRNA and position 2 of adenine 37 in tRNAs. m2A2503 modification seems to play a crucial role in the proofreading step occurring at the peptidyl transferase center and thus would serve to optimize ribosomal fidelity. The protein is Dual-specificity RNA methyltransferase RlmN of Edwardsiella ictaluri (strain 93-146).